The chain runs to 379 residues: 1-deoxy-D-xylulose 5-phosphate reductoisomerase (379 aa).

7 residues coordinate NADPH: threonine 10, glycine 11, serine 12, isoleucine 13, arginine 38, asparagine 39, and asparagine 121. Lysine 122 is a binding site for 1-deoxy-D-xylulose 5-phosphate. Position 123 (glutamate 123) interacts with NADPH. Aspartate 147 provides a ligand contact to Mn(2+). 4 residues coordinate 1-deoxy-D-xylulose 5-phosphate: serine 148, glutamate 149, serine 173, and histidine 196. Residue glutamate 149 participates in Mn(2+) binding. Glycine 202 contacts NADPH. Positions 209, 214, 215, and 218 each coordinate 1-deoxy-D-xylulose 5-phosphate. Glutamate 218 serves as a coordination point for Mn(2+).

This sequence belongs to the DXR family. The cofactor is Mg(2+). Mn(2+) is required as a cofactor.

The catalysed reaction is 2-C-methyl-D-erythritol 4-phosphate + NADP(+) = 1-deoxy-D-xylulose 5-phosphate + NADPH + H(+). It functions in the pathway isoprenoid biosynthesis; isopentenyl diphosphate biosynthesis via DXP pathway; isopentenyl diphosphate from 1-deoxy-D-xylulose 5-phosphate: step 1/6. Catalyzes the NADPH-dependent rearrangement and reduction of 1-deoxy-D-xylulose-5-phosphate (DXP) to 2-C-methyl-D-erythritol 4-phosphate (MEP). The chain is 1-deoxy-D-xylulose 5-phosphate reductoisomerase from Chlamydia trachomatis serovar L2 (strain ATCC VR-902B / DSM 19102 / 434/Bu).